The sequence spans 1050 residues: Probable beta-glucosidase E (1050 aa).

The disordered stretch occupies residues 1-87; the sequence is MPPPDSNPGS…RSSSTNGGHN (87 aa). Over 1–174 the chain is Cytoplasmic; the sequence is MPPPDSNPGS…VKYARIWRRT (174 aa). The segment covering 11 to 20 has biased composition (basic and acidic residues); the sequence is FRDHLKHDNK. Low complexity predominate over residues 47 to 56; that stretch reads SPRSASASSS. The segment covering 78-87 has biased composition (polar residues); sequence RSSSTNGGHN. The chain crosses the membrane as a helical; Signal-anchor for type II membrane protein span at residues 175–195; that stretch reads LVVVIVALALLVWGFLRFTAA. The Extracellular portion of the chain corresponds to 196–1050; sequence QRQGPKVWPM…SRDLPLQAKY (855 aa). N236, N244, N300, and N430 each carry an N-linked (GlcNAc...) asparagine glycan. D458 is a catalytic residue. 7 N-linked (GlcNAc...) asparagine glycosylation sites follow: N501, N540, N605, N884, N920, N929, and N993.

The protein belongs to the glycosyl hydrolase 3 family.

It localises to the cell membrane. The catalysed reaction is Hydrolysis of terminal, non-reducing beta-D-glucosyl residues with release of beta-D-glucose.. The protein operates within glycan metabolism; cellulose degradation. In terms of biological role, beta-glucosidases are one of a number of cellulolytic enzymes involved in the degradation of cellulosic biomass. Catalyzes the last step releasing glucose from the inhibitory cellobiose. The protein is Probable beta-glucosidase E (bglE) of Aspergillus clavatus (strain ATCC 1007 / CBS 513.65 / DSM 816 / NCTC 3887 / NRRL 1 / QM 1276 / 107).